The primary structure comprises 330 residues: MKKQYIEKQQQISFVKSFFSSQLEQLLGLIEVQAPILSRIGDGTQDNLSGTEKAVQVKVKALPDATFEVVHSLAKWKRKTLGAYDFSSGEGIYTHMKALRPDEDRLSPIHSVYVDQWDWERVMGDGERHAEYLKSTVTRIYQGIKATEAAVHQAFGIQPFLPEQIHFVHTETLLKRYPELDAKGRERAIAKELGAVFLIGIGGKLSSGQSHDVRAPDYDDWTTPGEQELAGLNGDIVVWNPVLNDAFEISSMGIRVDAEALTRQLALTQDEERLKLEWHQALLRGEMPQTIGGGIGQSRLVMLLLQLSHIGQVQCGVWPQPLRESVSGLL.

The protein belongs to the class-II aminoacyl-tRNA synthetase family. AsnA subfamily.

It localises to the cytoplasm. It carries out the reaction L-aspartate + NH4(+) + ATP = L-asparagine + AMP + diphosphate + H(+). The protein operates within amino-acid biosynthesis; L-asparagine biosynthesis; L-asparagine from L-aspartate (ammonia route): step 1/1. This is Aspartate--ammonia ligase from Pectobacterium carotovorum subsp. carotovorum (strain PC1).